Consider the following 815-residue polypeptide: (-)-kolavenyl diphosphate synthase TPS14, chloroplastic (815 aa).

The transit peptide at 1 to 51 directs the protein to the chloroplast; the sequence is MFMSSSSSSHARRPQLSSFSYLHPPLPFPGLSFFNTRDKRVNFDSTRIICI. K247 provides a ligand contact to substrate. Positions 379 and 381 each coordinate Mg(2+). The short motif at 379-382 is the DXDD motif element; that stretch reads DIDD. Residue K465 participates in substrate binding.

The protein belongs to the terpene synthase family. Tpsc subfamily. Mg(2+) is required as a cofactor.

It localises to the plastid. The protein localises to the chloroplast. The catalysed reaction is (2E,6E,10E)-geranylgeranyl diphosphate = (-)-kolavenyl diphosphate. With respect to regulation, inhibited by high concentrations of magnesium. Its function is as follows. Diterpene synthase that catalyzes the formation of (-)-kolavenyl diphosphate from geranylgeranyl diphosphate (GGPP). The polypeptide is (-)-kolavenyl diphosphate synthase TPS14, chloroplastic (Tripterygium wilfordii (Thunder God vine)).